A 175-amino-acid chain; its full sequence is Short chain dehydrogenase/reductase dpmpG (175 aa).

NADP(+) contacts are provided by Ile-18, Asp-71, Asn-98, and Lys-132.

Belongs to the short-chain dehydrogenases/reductases (SDR) family.

The protein operates within secondary metabolite biosynthesis; terpenoid biosynthesis. Its function is as follows. Short chain dehydrogenase/reductase; part of the gene cluster that mediates the biosynthesis of diterpenoid pyrones. The first step of the pathway is the synthesis of the alpha-pyrone moiety by the polyketide synthase dpmpA via condensation of one acetyl-CoA starter unit with 3 malonyl-CoA units and 2 methylations. The alpha-pyrone is then combined with geranylgeranyl pyrophosphate (GGPP) formed by the GGPP synthase dpmpD through the action of the prenyltransferase dpmpC to yield a linear alpha-pyrone diterpenoid. Subsequent steps in the diterpenoid pyrone biosynthetic pathway involve the decalin core formation, which is initiated by the epoxidation of the C10-C11 olefin by the FAD-dependent oxidoreductase dpmpE, and is followed by a cyclization cascade catalyzed by the terpene cyclase dpmpB. The short chain dehydrogenase/reductase dpmpG then oxidizes the 8S hydroxy group to a ketone and the short chain dehydrogenase/reductase dpmpH reduces the ketone to the 8R hydroxy group to yield higginsianin B. Higginsianin B is further methylated by the methyltransferase dpmpI to produce the intermediate named FDDP B. The cytochrome P450 monooxygenase dpmpJ then oxidizes the C-26 methyl to primary alcohol, producing the final diterpenoid pyrone with a C-26 primary alcohol on the gamma-pyrone moiety named FDDP C. The chain is Short chain dehydrogenase/reductase dpmpG from Macrophomina phaseolina (strain MS6) (Charcoal rot fungus).